The sequence spans 283 residues: Circadian clock oscillator protein KaiA (283 aa).

Residues 1-146 are psR domain, not required to form KaiA:KaiB:KaiC complex, or for a full KaiC phosphorylation cycle; sequence MAQSTALTIC…LFRLPALKES (146 aa). In terms of domain architecture, KaiA N-terminal spans 3-163; sequence QSTALTICGL…RLSQKLKERL (161 aa). The flexible linker stretch occupies residues 164–172; that stretch reads GYLGVYYKR. Residues 173–281 enclose the KaiA C-terminal domain; that stretch reads DTAFFFRRMS…CEMYRRSIPR (109 aa).

The protein belongs to the KaiA family. Homodimer. The KaiABC complex composition changes during the circadian cycle to control KaiC phosphorylation. Complexes KaiC(6), KaiA(2-4):KaiC(6), KaiB(6):KaiC(6) and KaiC(6):KaiB(6):KaiA(12) are among the most important forms, many form cooperatively. Binds to KaiB and KaiC, the N-terminus (pseudoreceiver domain PsR) is not required for either interaction. 1 KaiB binds to one subunit of the KaiA homodimer. KaiA and CikA bind to the same region of the KaiB(fs) form and therefore compete.

In terms of biological role, key component of the KaiABC oscillator complex, which constitutes the main circadian regulator in cyanobacteria. Complex composition changes during the circadian cycle to control KaiC phosphorylation. KaiA stimulates KaiC autophosphorylation, while KaiB sequesters KaiA, leading to KaiC autodephosphorylation. KaiA binding to the KaiC CII domain during the subjective day yields KaiA(2-4):KaiC(6) complexes which stimulate KaiC autophosphorylation. Phospho-Ser-431 KaiC accumulation triggers binding of KaiB during the subjective night to form the KaiB(6):KaiC(6) complex, leading to changes in the output regulators CikA and SasA. KaiB(6):KaiC(6) formation exposes a site for KaiA binding on KaiB that sequesters KaiA from KaiC's CII domain, making the KaiC(6):KaiB(6):KaiA(12) complex resulting in KaiC autodephosphorylation. Complete dephosphorylation of KaiC leads to dissociation of KaiA(2):KaiB(1), completing 1 cycle of the Kai oscillator. Formation of the KaiB:KaiC complex is promoted by KaiA, helping switch KaiC from its autophosphorylation to autodephosphatase function. Its function is as follows. Binds oxidized quinones via the N-terminal PsR domain, allowing it to sense redox changes and possibly mediate clock input. In Thermosynechococcus vestitus (strain NIES-2133 / IAM M-273 / BP-1), this protein is Circadian clock oscillator protein KaiA.